The primary structure comprises 206 residues: Ribosomal RNA large subunit methyltransferase E (206 aa).

Residues Gly-60, Trp-62, Asp-80, Asn-96, and Asp-121 each coordinate S-adenosyl-L-methionine. The active-site Proton acceptor is Lys-161.

It belongs to the class I-like SAM-binding methyltransferase superfamily. RNA methyltransferase RlmE family.

The protein resides in the cytoplasm. It catalyses the reaction uridine(2552) in 23S rRNA + S-adenosyl-L-methionine = 2'-O-methyluridine(2552) in 23S rRNA + S-adenosyl-L-homocysteine + H(+). In terms of biological role, specifically methylates the uridine in position 2552 of 23S rRNA at the 2'-O position of the ribose in the fully assembled 50S ribosomal subunit. This chain is Ribosomal RNA large subunit methyltransferase E, found in Francisella philomiragia subsp. philomiragia (strain ATCC 25017 / CCUG 19701 / FSC 153 / O#319-036).